Here is a 294-residue protein sequence, read N- to C-terminus: Cytidine deaminase (294 aa).

2 CMP/dCMP-type deaminase domains span residues D48–K168 and L186–A294. Position 89 to 91 (N89 to E91) interacts with substrate. H102 serves as a coordination point for Zn(2+). E104 (proton donor) is an active-site residue. Positions 129 and 132 each coordinate Zn(2+).

The protein belongs to the cytidine and deoxycytidylate deaminase family. Homodimer. The cofactor is Zn(2+).

It carries out the reaction cytidine + H2O + H(+) = uridine + NH4(+). The enzyme catalyses 2'-deoxycytidine + H2O + H(+) = 2'-deoxyuridine + NH4(+). This enzyme scavenges exogenous and endogenous cytidine and 2'-deoxycytidine for UMP synthesis. The protein is Cytidine deaminase of Enterobacter sp. (strain 638).